Reading from the N-terminus, the 77-residue chain is MKLTCVLIIAVLFLIVCQLNTADDSRDKQEYRAVRLRDAIRNSRGSRSCGNLGESCSAHRCCPGLMCMGEASICIPY.

An N-terminal signal peptide occupies residues 1–22 (MKLTCVLIIAVLFLIVCQLNTA). A propeptide spanning residues 23–47 (DDSRDKQEYRAVRLRDAIRNSRGSR) is cleaved from the precursor. Cystine bridges form between Cys-49–Cys-62, Cys-56–Cys-67, and Cys-61–Cys-74.

It belongs to the conotoxin O1 superfamily. As to expression, expressed by the venom duct.

It is found in the secreted. This Conus arenatus (Sand-dusted cone) protein is Conotoxin ArMKLT2-0322.